We begin with the raw amino-acid sequence, 434 residues long: Histidinol dehydrogenase (434 aa).

NAD(+) contacts are provided by Y130, Q188, and N211. Substrate is bound by residues S237, Q259, and H262. Zn(2+) contacts are provided by Q259 and H262. Active-site proton acceptor residues include E326 and H327. Substrate contacts are provided by H327, D360, E414, and H419. Position 360 (D360) interacts with Zn(2+). Residue H419 participates in Zn(2+) binding.

It belongs to the histidinol dehydrogenase family. Homodimer. The cofactor is Zn(2+).

The enzyme catalyses L-histidinol + 2 NAD(+) + H2O = L-histidine + 2 NADH + 3 H(+). The protein operates within amino-acid biosynthesis; L-histidine biosynthesis; L-histidine from 5-phospho-alpha-D-ribose 1-diphosphate: step 9/9. Functionally, catalyzes the sequential NAD-dependent oxidations of L-histidinol to L-histidinaldehyde and then to L-histidine. The chain is Histidinol dehydrogenase from Salmonella typhi.